Reading from the N-terminus, the 421-residue chain is Tubulin gamma-3 chain (421 aa).

94–100 contributes to the GTP binding site; the sequence is AGGTGSG.

It belongs to the tubulin family.

The protein localises to the cytoplasm. It localises to the cytoskeleton. The protein resides in the microtubule organizing center. Its function is as follows. Tubulin is the major constituent of microtubules. The gamma chain is found at microtubule organizing centers (MTOC) such as the spindle poles, suggesting that it is involved in the minus-end nucleation of microtubule assembly. The polypeptide is Tubulin gamma-3 chain (TUBG3) (Zea mays (Maize)).